The following is a 317-amino-acid chain: tRNA pseudouridine synthase B (317 aa).

Catalysis depends on Asp-47, which acts as the Nucleophile.

The protein belongs to the pseudouridine synthase TruB family. Type 1 subfamily.

It carries out the reaction uridine(55) in tRNA = pseudouridine(55) in tRNA. In terms of biological role, responsible for synthesis of pseudouridine from uracil-55 in the psi GC loop of transfer RNAs. The sequence is that of tRNA pseudouridine synthase B from Shewanella woodyi (strain ATCC 51908 / MS32).